Reading from the N-terminus, the 365-residue chain is Guanine nucleotide-binding protein alpha-6 subunit (365 aa).

The N-myristoyl glycine moiety is linked to residue Gly-2. A G-alpha domain is found at 42–364 (NRFKILLLGT…NENLRSAGLH (323 aa)). Residues 45–58 (KILLLGTAESGKST) are G1 motif. Residues 50–57 (GTAESGKS), 187–193 (VHCRIST), 212–216 (DVGGQ), 281–284 (NKYD), and Ala-336 each bind GTP. 2 residues coordinate Mg(2+): Ser-57 and Thr-193. Residues 185–193 (DIVHCRIST) are G2 motif. Residues 208 to 217 (FKMVDVGGQR) form a G3 motif region. Positions 277–284 (VLFLNKYD) are G4 motif. Residues 334 to 339 (TTATDT) are G5 motif.

Belongs to the G-alpha family. In terms of assembly, g proteins are composed of 3 units; alpha, beta and gamma. The alpha chain contains the guanine nucleotide binding site.

Guanine nucleotide-binding proteins (G proteins) are involved as modulators or transducers in various transmembrane signaling systems. The polypeptide is Guanine nucleotide-binding protein alpha-6 subunit (gpa-6) (Caenorhabditis briggsae).